We begin with the raw amino-acid sequence, 398 residues long: UDP-N-acetylglucosamine--N-acetylmuramyl-(pentapeptide) pyrophosphoryl-undecaprenol N-acetylglucosamine transferase (398 aa).

UDP-N-acetyl-alpha-D-glucosamine is bound by residues 15–17, asparagine 125, arginine 168, serine 196, and glutamine 297; that span reads TGG.

The protein belongs to the glycosyltransferase 28 family. MurG subfamily.

It localises to the cell inner membrane. It catalyses the reaction di-trans,octa-cis-undecaprenyl diphospho-N-acetyl-alpha-D-muramoyl-L-alanyl-D-glutamyl-meso-2,6-diaminopimeloyl-D-alanyl-D-alanine + UDP-N-acetyl-alpha-D-glucosamine = di-trans,octa-cis-undecaprenyl diphospho-[N-acetyl-alpha-D-glucosaminyl-(1-&gt;4)]-N-acetyl-alpha-D-muramoyl-L-alanyl-D-glutamyl-meso-2,6-diaminopimeloyl-D-alanyl-D-alanine + UDP + H(+). Its pathway is cell wall biogenesis; peptidoglycan biosynthesis. Its function is as follows. Cell wall formation. Catalyzes the transfer of a GlcNAc subunit on undecaprenyl-pyrophosphoryl-MurNAc-pentapeptide (lipid intermediate I) to form undecaprenyl-pyrophosphoryl-MurNAc-(pentapeptide)GlcNAc (lipid intermediate II). The protein is UDP-N-acetylglucosamine--N-acetylmuramyl-(pentapeptide) pyrophosphoryl-undecaprenol N-acetylglucosamine transferase of Erythrobacter litoralis (strain HTCC2594).